The following is a 447-amino-acid chain: Argininosuccinate lyase (447 aa).

It belongs to the lyase 1 family. Argininosuccinate lyase subfamily.

It is found in the cytoplasm. It catalyses the reaction 2-(N(omega)-L-arginino)succinate = fumarate + L-arginine. It functions in the pathway amino-acid biosynthesis; L-arginine biosynthesis; L-arginine from L-ornithine and carbamoyl phosphate: step 3/3. The protein is Argininosuccinate lyase of Bacteroides fragilis (strain YCH46).